A 718-amino-acid chain; its full sequence is Gephyrin (718 aa).

Positions 1–19 (MSNTLTTERNITNSPTAAQ) are enriched in polar residues. Residues 1-26 (MSNTLTTERNITNSPTAAQLNEKESG) form a disordered region. The interval 31–176 (EWIVGVLTTS…LPGSVKAIRE (146 aa)) is MPT Mo-transferase. Positions 222–244 (NQNNQNNNNNNNNNNNNNNNNNS) are enriched in low complexity. 2 disordered regions span residues 222–266 (NQNN…SSYN) and 344–364 (TGEN…NDDD). Residues 245–254 (HNHHHHHHHS) show a composition bias toward basic residues. The interval 260 to 718 (KRGSSYNMTP…KAILIGPINN (459 aa)) is MPT adenylyltransferase.

In the N-terminal section; belongs to the MoaB/Mog family. This sequence in the C-terminal section; belongs to the MoeA family. In terms of assembly, homotrimer, homodimer and homooligomer. Mg(2+) is required as a cofactor.

The protein localises to the cell membrane. The protein resides in the cytoplasm. It is found in the cytosol. It localises to the cytoskeleton. It carries out the reaction molybdopterin + ATP + H(+) = adenylyl-molybdopterin + diphosphate. The enzyme catalyses adenylyl-molybdopterin + molybdate = Mo-molybdopterin + AMP + H(+). It participates in cofactor biosynthesis; molybdopterin biosynthesis. Its function is as follows. Microtubule-associated protein involved in membrane protein-cytoskeleton interactions. Also has a catalytic activity and catalyzes two steps in the biosynthesis of the molybdenum cofactor. In the first step, molybdopterin is adenylated. Subsequently, molybdate is inserted into adenylated molybdopterin and AMP is released. This is Gephyrin (gphn) from Dictyostelium discoideum (Social amoeba).